The following is a 492-amino-acid chain: Bifunctional protein GlmU (492 aa).

Positions Met1–Arg241 are pyrophosphorylase. UDP-N-acetyl-alpha-D-glucosamine-binding positions include Leu12 to Gly15, Lys26, Gln83, and Gly88 to Thr89. Residue Asp114 coordinates Mg(2+). Positions 151, 166, 181, and 239 each coordinate UDP-N-acetyl-alpha-D-glucosamine. Asn239 contributes to the Mg(2+) binding site. The segment at Val242–Ala262 is linker. The N-acetyltransferase stretch occupies residues Gly263–Pro492. Residues Arg344 and Lys362 each contribute to the UDP-N-acetyl-alpha-D-glucosamine site. The active-site Proton acceptor is the His374. UDP-N-acetyl-alpha-D-glucosamine is bound by residues Tyr377 and Asn388. Acetyl-CoA is bound by residues Ala391, Asn397–Tyr398, and Ala434. Residues Pro443–Pro492 form a disordered region.

It in the N-terminal section; belongs to the N-acetylglucosamine-1-phosphate uridyltransferase family. This sequence in the C-terminal section; belongs to the transferase hexapeptide repeat family. Homotrimer. It depends on Mg(2+) as a cofactor.

Its subcellular location is the cytoplasm. The enzyme catalyses alpha-D-glucosamine 1-phosphate + acetyl-CoA = N-acetyl-alpha-D-glucosamine 1-phosphate + CoA + H(+). The catalysed reaction is N-acetyl-alpha-D-glucosamine 1-phosphate + UTP + H(+) = UDP-N-acetyl-alpha-D-glucosamine + diphosphate. Its pathway is nucleotide-sugar biosynthesis; UDP-N-acetyl-alpha-D-glucosamine biosynthesis; N-acetyl-alpha-D-glucosamine 1-phosphate from alpha-D-glucosamine 6-phosphate (route II): step 2/2. It functions in the pathway nucleotide-sugar biosynthesis; UDP-N-acetyl-alpha-D-glucosamine biosynthesis; UDP-N-acetyl-alpha-D-glucosamine from N-acetyl-alpha-D-glucosamine 1-phosphate: step 1/1. The protein operates within bacterial outer membrane biogenesis; LPS lipid A biosynthesis. Catalyzes the last two sequential reactions in the de novo biosynthetic pathway for UDP-N-acetylglucosamine (UDP-GlcNAc). The C-terminal domain catalyzes the transfer of acetyl group from acetyl coenzyme A to glucosamine-1-phosphate (GlcN-1-P) to produce N-acetylglucosamine-1-phosphate (GlcNAc-1-P), which is converted into UDP-GlcNAc by the transfer of uridine 5-monophosphate (from uridine 5-triphosphate), a reaction catalyzed by the N-terminal domain. The sequence is that of Bifunctional protein GlmU from Mycobacterium ulcerans (strain Agy99).